The sequence spans 485 residues: N-succinylglutamate 5-semialdehyde dehydrogenase (485 aa).

Residue 220–225 (GSANTG) participates in NAD(+) binding. Catalysis depends on residues E243 and C278.

The protein belongs to the aldehyde dehydrogenase family. AstD subfamily.

The catalysed reaction is N-succinyl-L-glutamate 5-semialdehyde + NAD(+) + H2O = N-succinyl-L-glutamate + NADH + 2 H(+). It participates in amino-acid degradation; L-arginine degradation via AST pathway; L-glutamate and succinate from L-arginine: step 4/5. Functionally, catalyzes the NAD-dependent reduction of succinylglutamate semialdehyde into succinylglutamate. The polypeptide is N-succinylglutamate 5-semialdehyde dehydrogenase (Vibrio cholerae serotype O1 (strain M66-2)).